The sequence spans 232 residues: Phosphoglycolate phosphatase (232 aa).

Residue aspartate 13 is the Nucleophile of the active site. Residues aspartate 13, aspartate 15, and aspartate 175 each coordinate Mg(2+).

Belongs to the HAD-like hydrolase superfamily. CbbY/CbbZ/Gph/YieH family. Monomer. Requires Mg(2+) as cofactor. Chloride serves as cofactor.

The catalysed reaction is 2-phosphoglycolate + H2O = glycolate + phosphate. Its pathway is organic acid metabolism; glycolate biosynthesis; glycolate from 2-phosphoglycolate: step 1/1. Functionally, specifically catalyzes the dephosphorylation of 2-phosphoglycolate. Is involved in the dissimilation of the intracellular 2-phosphoglycolate formed during the DNA repair of 3'-phosphoglycolate ends, a major class of DNA lesions induced by oxidative stress. This chain is Phosphoglycolate phosphatase, found in Yersinia pestis.